Consider the following 855-residue polypeptide: MASFPETDFQICLLCKEMCGSPAPLSSSSSASSSSSQTSTSSAGGGGPGAAARRLHVLPCLHAFCRPCLEAHRLPAPGGAGPAEALKLRCPVCDQKVVLAEAAGMDALPSSAFLLSNLLDAVVATADEPPPKNGRAGGGPGGAGGHSNHRHHAHHPAQRAAAPAPQPPPGPAASPGSLLLRRPHGCSSCDEGNAASSRCLDCQEHLCDNCVRAHQRVRLTKDHYIERGPPGPAAASAAQQLGLGPPFAGAPFSILSVFPERLGFCQHHDDEVLHLYCDTCSVPICRECTLGRHGGHSFAYLQDALQDSRALTIQLLADAQQGRQAIQLSIEQAQTVAEQVEMKAKVVQSEVKAVTARHKKALEERECELLWKVEKIRQVKAKSLYLQVEKLRQNLNKLESTISAVQQVLEEGRALDILLARDRMLAQVQELKTIRGLLQPQEDDRVMFTPPDQALYLALKSFGFVSSGAFAPLTKAAGDGIKRALQGKVASFTVMGYDHNGEPRLSGGDLMSVVVLGPDGNLFGAEVSDQQNGTYVVSYRPQLEGEHLVSVTLYNQHIENSPFKVVVKSGRSYVGIGLPVLSFGSEGDGEGKLCRPWGVSVDKEGYIIVADRSNNRIQVFKPCGSFHHKFGTLGSRPGQFDRPAGVACDASRRIVVADKDNHRIQIFTFEGQFLLKFGEKGTKNGQFNYPWDVAVNSEGKILVSDTRNHRIQLFGPDGVFLNKYGFEGSLWKHFDSPRGVAFNHEGHLVVTDFNNHRLLVIHPDCQSARFLGSEGTGNGQFLRPQGVAVDQEGRIIVADSRNHRVQMFEANGSFLCKFGAQGSGFGQMDRPSGIAVTPEGLIVVVDFGNNRILIF.

Ala-2 carries the N-acetylalanine modification. An RING-type zinc finger spans residues 12–94; that stretch reads CLLCKEMCGS…ALKLRCPVCD (83 aa). Residues 26–42 are compositionally biased toward low complexity; it reads SSSSSASSSSSQTSTSS. Disordered regions lie at residues 26 to 48 and 126 to 177; these read SSSS…GGGP and ADEP…SPGS. Residues 135-145 show a composition bias toward gly residues; sequence RAGGGPGGAGG. Basic residues predominate over residues 147-157; the sequence is SNHRHHAHHPA. A B box-type 1; atypical zinc finger spans residues 181–228; sequence RRPHGCSSCDEGNAASSRCLDCQEHLCDNCVRAHQRVRLTKDHYIERG. A B box-type 2 zinc finger spans residues 260–301; that stretch reads ERLGFCQHHDDEVLHLYCDTCSVPICRECTLGRHGGHSFAYL. The Zn(2+) site is built by Cys-265, His-268, Cys-288, and His-293. The stretch at 378-414 forms a coiled coil; that stretch reads QVKAKSLYLQVEKLRQNLNKLESTISAVQQVLEEGRA. The Filamin repeat unit spans residues 466–567; sequence SSGAFAPLTK…IENSPFKVVV (102 aa). NHL repeat units lie at residues 580 to 623, 627 to 670, 674 to 717, 721 to 764, 768 to 811, and 815 to 855; these read VLSF…FKPC, HHKF…FTFE, LLKF…FGPD, LNKY…IHPD, ARFL…FEAN, and LCKF…ILIF.

The protein belongs to the TRIM/RBCC family. As to quaternary structure, interacts (via NHL repeats) with AGO2; the interaction increases in presence of RNA. Interacts with HSP90AA1. Interacts (via NHL repeats) with MOV10, PABPC1, PUM1, PUM2, STAU2, XRN1 and XRN2 in an RNA-dependent manner. Interacts with SHCBP1; leading to enhance its stability. In terms of processing, autoubiquitinated.

It is found in the cytoplasm. Its subcellular location is the P-body. It catalyses the reaction S-ubiquitinyl-[E2 ubiquitin-conjugating enzyme]-L-cysteine + [acceptor protein]-L-lysine = [E2 ubiquitin-conjugating enzyme]-L-cysteine + N(6)-ubiquitinyl-[acceptor protein]-L-lysine.. It participates in protein modification; protein ubiquitination. Functionally, E3 ubiquitin-protein ligase that cooperates with the microRNAs (miRNAs) machinery and promotes embryonic stem cells proliferation and maintenance. Binds to miRNAs and associates with AGO2, participating in post-transcriptional repression of transcripts such as CDKN1A. In addition, participates in post-transcriptional mRNA repression in a miRNA independent mechanism. Facilitates the G1-S transition to promote rapid embryonic stem cell self-renewal by repressing CDKN1A expression. Required to maintain proliferation and prevent premature differentiation of neural progenitor cells during early neural development: positively regulates FGF signaling by controlling the stability of SHCBP1. Specific regulator of miRNA biogenesis. Binds to miRNA MIR29A hairpin and postranscriptionally modulates MIR29A levels, which indirectly regulates TET proteins expression. The sequence is that of E3 ubiquitin-protein ligase TRIM71 (Trim71) from Rattus norvegicus (Rat).